A 352-amino-acid polypeptide reads, in one-letter code: DNA polymerase IV (352 aa).

Residues Ile-6–Gly-187 form the UmuC domain. Mg(2+)-binding residues include Asp-10 and Asp-105. Residue Glu-106 is part of the active site.

Belongs to the DNA polymerase type-Y family. Monomer. Requires Mg(2+) as cofactor.

Its subcellular location is the cytoplasm. It catalyses the reaction DNA(n) + a 2'-deoxyribonucleoside 5'-triphosphate = DNA(n+1) + diphosphate. In terms of biological role, poorly processive, error-prone DNA polymerase involved in untargeted mutagenesis. Copies undamaged DNA at stalled replication forks, which arise in vivo from mismatched or misaligned primer ends. These misaligned primers can be extended by PolIV. Exhibits no 3'-5' exonuclease (proofreading) activity. May be involved in translesional synthesis, in conjunction with the beta clamp from PolIII. The sequence is that of DNA polymerase IV from Marinomonas sp. (strain MWYL1).